We begin with the raw amino-acid sequence, 368 residues long: RNA polymerase sigma factor SigA (368 aa).

The segment at 60-86 (VVDENGDPSEHSLKKDEKEAEKAQAED) is disordered. Basic and acidic residues predominate over residues 67-84 (PSEHSLKKDEKEAEKAQA). The sigma-70 factor domain-2 stretch occupies residues 135 to 205 (LAEANLRLVV…TRAIADQART (71 aa)). The Interaction with polymerase core subunit RpoC signature appears at 159–162 (DLIQ). A sigma-70 factor domain-3 region spans residues 214–290 (ETINKLIRIQ…DQDATSPAEH (77 aa)). Positions 303-356 (VLDTLTDREENVLRLRFGLDDGRTRTLEEVGKVFGVTRERIRQIEAKALRKLRH) are sigma-70 factor domain-4. Residues 329-348 (LEEVGKVFGVTRERIRQIEA) constitute a DNA-binding region (H-T-H motif).

Belongs to the sigma-70 factor family. RpoD/SigA subfamily. Interacts transiently with the RNA polymerase catalytic core.

The protein localises to the cytoplasm. Functionally, sigma factors are initiation factors that promote the attachment of RNA polymerase to specific initiation sites and are then released. This sigma factor is the primary sigma factor during exponential growth. The polypeptide is RNA polymerase sigma factor SigA (Enterococcus faecalis (strain ATCC 700802 / V583)).